A 789-amino-acid chain; its full sequence is Phenylalanine--tRNA ligase beta subunit (789 aa).

The 111-residue stretch at 39 to 149 (ADGLEAFRIA…HEAPVGQSYV (111 aa)) folds into the tRNA-binding domain. One can recognise a B5 domain in the interval 399 to 471 (SAVPVISYDP…RIEGLDNVPS (73 aa)). The Mg(2+) site is built by Asp449, Asp455, and Asp459. An FDX-ACB domain is found at 696 to 788 (SMLQPVFRDF…AAAKKGARLR (93 aa)).

Belongs to the phenylalanyl-tRNA synthetase beta subunit family. Type 1 subfamily. In terms of assembly, tetramer of two alpha and two beta subunits. Mg(2+) serves as cofactor.

It localises to the cytoplasm. The enzyme catalyses tRNA(Phe) + L-phenylalanine + ATP = L-phenylalanyl-tRNA(Phe) + AMP + diphosphate + H(+). The protein is Phenylalanine--tRNA ligase beta subunit of Zymomonas mobilis subsp. mobilis (strain ATCC 31821 / ZM4 / CP4).